A 202-amino-acid polypeptide reads, in one-letter code: MMIVVMLILSYLIGAIPNGYVIGKLFFKKDIRQYGSGNTGATNSFRVLGKPAGFIVTFLDIFKGFITVFFPIWFPVHADGPLSTFFTHGLIVGLFAILGHVYPIYLRFKGGKAVATSAGVVLGVNPILLLILAIIFFGVLYIFKYVSLSSIIAAICCVIGSLIIQDYILFGMSLLVSIILIVRHRTNIVRIFKGEEPKIKWM.

The next 6 membrane-spanning stretches (helical) occupy residues 2–22 (MIVV…GYVI), 54–74 (FIVT…PIWF), 85–105 (FFTH…YPIY), 120–140 (VVLG…FGVL), 141–161 (YIFK…VIGS), and 162–182 (LIIQ…ILIV).

Belongs to the PlsY family. Probably interacts with PlsX.

The protein resides in the cell membrane. The enzyme catalyses an acyl phosphate + sn-glycerol 3-phosphate = a 1-acyl-sn-glycero-3-phosphate + phosphate. It participates in lipid metabolism; phospholipid metabolism. Its function is as follows. Catalyzes the transfer of an acyl group from acyl-phosphate (acyl-PO(4)) to glycerol-3-phosphate (G3P) to form lysophosphatidic acid (LPA). This enzyme utilizes acyl-phosphate as fatty acyl donor, but not acyl-CoA or acyl-ACP. In Staphylococcus haemolyticus (strain JCSC1435), this protein is Glycerol-3-phosphate acyltransferase.